Reading from the N-terminus, the 61-residue chain is Large ribosomal subunit protein bL28 (61 aa).

The tract at residues 1–26 (MAKDFVTGRKTTFGKKRSHALNQTNR) is disordered.

Belongs to the bacterial ribosomal protein bL28 family.

In Ligilactobacillus salivarius (strain UCC118) (Lactobacillus salivarius), this protein is Large ribosomal subunit protein bL28.